The sequence spans 39 residues: Photosystem II reaction center protein L (39 aa).

The chain crosses the membrane as a helical span at residues 18-38 (SLYLGLLLVAVLGILFSSYFF).

It belongs to the PsbL family. In terms of assembly, PSII is composed of 1 copy each of membrane proteins PsbA, PsbB, PsbC, PsbD, PsbE, PsbF, PsbH, PsbI, PsbJ, PsbK, PsbL, PsbM, PsbT, PsbX, PsbY, PsbZ, Psb30/Ycf12, peripheral proteins PsbO, CyanoQ (PsbQ), PsbU, PsbV and a large number of cofactors. It forms dimeric complexes.

Its subcellular location is the cellular thylakoid membrane. One of the components of the core complex of photosystem II (PSII). PSII is a light-driven water:plastoquinone oxidoreductase that uses light energy to abstract electrons from H(2)O, generating O(2) and a proton gradient subsequently used for ATP formation. It consists of a core antenna complex that captures photons, and an electron transfer chain that converts photonic excitation into a charge separation. This subunit is found at the monomer-monomer interface and is required for correct PSII assembly and/or dimerization. The chain is Photosystem II reaction center protein L from Rippkaea orientalis (strain PCC 8801 / RF-1) (Cyanothece sp. (strain PCC 8801)).